Consider the following 202-residue polypeptide: Protein DCV1 (202 aa).

The N-terminal stretch at 1–18 (MLNYKLILLFSSFLQLIS) is a signal peptide. Transmembrane regions (helical) follow at residues 91-107 (IGGLLISIPVATCLTFI), 137-155 (ILTLLSTIFACTVILLLCM), and 168-189 (LVWLANCSLFPLLVIGVHFLSF).

Its subcellular location is the membrane. In Saccharomyces cerevisiae (strain ATCC 204508 / S288c) (Baker's yeast), this protein is Protein DCV1 (DCV1).